The sequence spans 218 residues: GTP cyclohydrolase 1 (218 aa).

Residues C109, H112, and C180 each coordinate Zn(2+).

It belongs to the GTP cyclohydrolase I family. Toroid-shaped homodecamer, composed of two pentamers of five dimers.

The catalysed reaction is GTP + H2O = 7,8-dihydroneopterin 3'-triphosphate + formate + H(+). The protein operates within cofactor biosynthesis; 7,8-dihydroneopterin triphosphate biosynthesis; 7,8-dihydroneopterin triphosphate from GTP: step 1/1. The protein is GTP cyclohydrolase 1 of Haemophilus ducreyi (strain 35000HP / ATCC 700724).